The following is a 496-amino-acid chain: Aminoacetaldehyde dehydrogenase (496 aa).

Residues L166, W168, K192, S246, T249, and Y256 each contribute to the NADH site. Residue E268 is the Proton acceptor of the active site. Position 269 (C269) interacts with NADH. The active-site Nucleophile is the C303. Residues K353 and E398 each coordinate NADH.

Belongs to the aldehyde dehydrogenase family. Homotetramer, formed by two symmetrical dimers.

It catalyses the reaction aminoacetaldehyde + NAD(+) + H2O = glycine + NADH + 2 H(+). It carries out the reaction 3-aminopropanal + NAD(+) + H2O = beta-alanine + NADH + 2 H(+). In terms of biological role, NAD(+)-dependent aminoaldehyde dehydrogenase highly efficient with protonated aminoacetaldehyde (ACTAL) and 3-aminopropanaldehyde (APAL). Likely participates in a still uncharacterized metabolic pathway present in proteobacteria species, in which ACTAL might be an intermediate, yielding glycine. Highly prefers NAD(+) over NADP(+). Shows very poor activity with acetaldehyde, propanaldehyde, butanaldehyde, pentanaldehyde, dimethylaminoacetaldehyde, trimethylaminoacetaldehyde (betaine aldehyde), trimethylaminobutanaldehyde, short aliphatic hydroxyaldehydes such as 3-hydroxypropanaldehyde and 2-hydroxypropanaldehyde (lactaldehyde), and aromatic aldehydes. The chain is Aminoacetaldehyde dehydrogenase from Pseudomonas aeruginosa (strain ATCC 15692 / DSM 22644 / CIP 104116 / JCM 14847 / LMG 12228 / 1C / PRS 101 / PAO1).